Here is a 359-residue protein sequence, read N- to C-terminus: MTRLDLRAGAAPAPAFVSAAARYGVIERPDLAFTPAIARETAHLYEKVKDFIPAFEWAAYAPYVHAINRLKKERNAVILAHNYQTPDIFHCVADIVGDSLQLARDATKVDAEIIVQCGVHFMAETSKLLNPEKTVLIPDAKAGCSLSESITGADVRLLKERYPGVPVVTYVNTSADVKAETDICCTSSNVLAVVESLESDTVLCIPDEYLAMNVARQTNKKILTWKGHCEVHERFTAAELLAYKEANPGIEIIGHPECHPDVIEVCDFSGSTSGMINYVKDKRPQRVLLVTECSMASNIQAEVQGVDFVKPCNLCPHMKRITLPKILDSLLNMTEEVLVDPAIADRARLAVERMVNLKQ.

Positions 81 and 99 each coordinate iminosuccinate. C144 contributes to the [4Fe-4S] cluster binding site. Residues 170–172 and S187 each bind iminosuccinate; that span reads YVN. C229 contributes to the [4Fe-4S] cluster binding site. Iminosuccinate-binding positions include 255-257 and T272; that span reads HPE. C315 is a binding site for [4Fe-4S] cluster.

Belongs to the quinolinate synthase family. Type 2 subfamily. It depends on [4Fe-4S] cluster as a cofactor.

The protein localises to the cytoplasm. The catalysed reaction is iminosuccinate + dihydroxyacetone phosphate = quinolinate + phosphate + 2 H2O + H(+). It participates in cofactor biosynthesis; NAD(+) biosynthesis; quinolinate from iminoaspartate: step 1/1. In terms of biological role, catalyzes the condensation of iminoaspartate with dihydroxyacetone phosphate to form quinolinate. The polypeptide is Quinolinate synthase (Sinorhizobium fredii (strain NBRC 101917 / NGR234)).